The chain runs to 478 residues: MDEKPTTRKGSGFCSLRYALALIMHFSNFTMITQRVSLSIAIIAMVNSTQHQDPANASTEGPVMDLLSNQSRGIKDFSTRAAVYQWSTETQGIIFSSISYGIILTLIPSGYLAGIFGAKQILGAGLLISSLLTLFTPLAADFGVILVIVIRTVQGMAQGMAWTGQFTIWAKWAPPLERSKLTSIAGSGAAFGSFIILCVGGLISQALGWPFIFYIFGSIGCVCCVLWFTVIYDDPMHHPCISVREKEHITSSVAQQSSSPRRSVPIKAMVRCLPLWAIFMGFFSHFWLCTIIITYLPTYISTVLHVNIRDSGVLSSLPFIAASSCTILGGQMADFLLSRNLLSLITVRKLFSSLGLLLPSLCAVALPFVTSSYIATIVLLILIPGTSNLCDSGFIINTLDVAPRYASFLMGISRGFGLTAGIISSTTTGFLISQDSESGWRNVFFLSAAVNMFGLIFYLIFGQAEIQSWAKERTLTRL.

4 N-linked (GlcNAc...) asparagine glycosylation sites follow: asparagine 28, asparagine 47, asparagine 56, and asparagine 69. Transmembrane regions (helical) follow at residues 98–118 (ISYGIILTLIPSGYLAGIFGA), 130–150 (SLLTLFTPLAADFGVILVIVI), 183–203 (SIAGSGAAFGSFIILCVGGLI), 211–231 (FIFYIFGSIGCVCCVLWFTVI), 273–293 (LPLWAIFMGFFSHFWLCTIII), 317–337 (LPFIAASSCTILGGQMADFLL), 341–361 (LLSLITVRKLFSSLGLLLPSL), 363–383 (AVALPFVTSSYIATIVLLILI), 405–425 (YASFLMGISRGFGLTAGIISS), and 442–462 (NVFFLSAAVNMFGLIFYLIFG).

It belongs to the major facilitator superfamily. Sodium/anion cotransporter family. In terms of tissue distribution, expressed in the liver, kidney, placenta, lung and thyroid (at protein level).

It is found in the apical cell membrane. It carries out the reaction 3 Na(+)(out) + phosphate(out) = 3 Na(+)(in) + phosphate(in). The catalysed reaction is urate(out) + n chloride(in) = urate(in) + n chloride(out). In terms of biological role, acts as a membrane potential-dependent organic anion transporter, the transport requires a low concentration of chloride ions. Mediates chloride-dependent transport of urate. Can actively transport inorganic phosphate into cells via Na(+) cotransport. This is Sodium-dependent phosphate transport protein 3 (Slc17a2) from Mus musculus (Mouse).